Here is a 688-residue protein sequence, read N- to C-terminus: Elongation factor G 2 (688 aa).

In terms of domain architecture, tr-type G spans 7–282; it reads DSIRNIGIIS…AVAAYLPSPR (276 aa). Residues 16–23, 80–84, and 134–137 contribute to the GTP site; these read SHIDAGKT, DTPGH, and NKMD.

This sequence belongs to the TRAFAC class translation factor GTPase superfamily. Classic translation factor GTPase family. EF-G/EF-2 subfamily.

The protein localises to the cytoplasm. Functionally, catalyzes the GTP-dependent ribosomal translocation step during translation elongation. During this step, the ribosome changes from the pre-translocational (PRE) to the post-translocational (POST) state as the newly formed A-site-bound peptidyl-tRNA and P-site-bound deacylated tRNA move to the P and E sites, respectively. Catalyzes the coordinated movement of the two tRNA molecules, the mRNA and conformational changes in the ribosome. The chain is Elongation factor G 2 from Geobacter metallireducens (strain ATCC 53774 / DSM 7210 / GS-15).